The primary structure comprises 269 residues: Shikimate dehydrogenase (NADP(+)) (269 aa).

Residues 17-19 (SKS) and T64 contribute to the shikimate site. K68 acts as the Proton acceptor in catalysis. Residue E80 coordinates NADP(+). 2 residues coordinate shikimate: N89 and D105. Residues 130 to 134 (GAGGA), 154 to 159 (NRTHAK), and M213 each bind NADP(+). Y215 provides a ligand contact to shikimate. An NADP(+)-binding site is contributed by G237.

This sequence belongs to the shikimate dehydrogenase family. As to quaternary structure, homodimer.

It catalyses the reaction shikimate + NADP(+) = 3-dehydroshikimate + NADPH + H(+). Its pathway is metabolic intermediate biosynthesis; chorismate biosynthesis; chorismate from D-erythrose 4-phosphate and phosphoenolpyruvate: step 4/7. Functionally, involved in the biosynthesis of the chorismate, which leads to the biosynthesis of aromatic amino acids. Catalyzes the reversible NADPH linked reduction of 3-dehydroshikimate (DHSA) to yield shikimate (SA). The chain is Shikimate dehydrogenase (NADP(+)) from Neisseria flavescens.